The following is a 1194-amino-acid chain: Probable disease resistance protein RPP1 (1194 aa).

Residues 1-27 form a disordered region; it reads MGSVMSLGCSKRKATNQDVDSESRKRR. Residues 96–260 form the TIR domain; that stretch reads WKHDVFPSFH…KISTDVSNML (165 aa). 105–110 is an NAD(+) binding site; sequence HGADVR. The active site involves E171. In terms of domain architecture, NB-ARC spans 280-535; that stretch reads DMLEQLLRLD…ACLFNGESTT (256 aa). LRR repeat units lie at residues 623–647, 658–681, 690–713, 714–737, 739–760, 761–784, 786–807, 808–831, 832–855, 866–878, 879–899, 900–922, 943–965, and 966–991; these read LSNT…HFVR, QLAL…GYES, PEFL…TKQL, RNLK…STAT, LEEL…IEKL, TSLQ…ENAT, LREL…IGTA, TNLK…IGDI, TDLE…IGNL, CSKL…NINL, KSLD…PEIS, THIS…IMSW, FDII…VKRM, and SRLR…SLDY. Residues 1170–1194 are disordered; it reads RRSSSPDLSPESSRVSSYDHCLRGD. Low complexity predominate over residues 1171–1185; that stretch reads RSSSPDLSPESSRVS.

The protein belongs to the disease resistance TIR-NB-LRR family.

It carries out the reaction NAD(+) + H2O = ADP-D-ribose + nicotinamide + H(+). TIR-NB-LRR receptor-like protein that confers resistance to the pathogen Hyaloperonospora arabidopsis. Probably acts as a NAD(+) hydrolase (NADase): in response to activation, catalyzes cleavage of NAD(+) into ADP-D-ribose (ADPR) and nicotinamide; NAD(+) cleavage triggering a defense system that promotes cell death. The sequence is that of Probable disease resistance protein RPP1 from Arabidopsis thaliana (Mouse-ear cress).